We begin with the raw amino-acid sequence, 63 residues long: MMCIINSESFHGSQKRSGVWSSGMILALGDFLINRGTKHARGPGFNSQLAPFFTIEKYSVRRS.

This is an uncharacterized protein from Saccharomyces cerevisiae (strain ATCC 204508 / S288c) (Baker's yeast).